The primary structure comprises 200 residues: Nascent polypeptide-associated complex subunit alpha (200 aa).

Residues 1-19 (MADPRVEELPEEEVKKTQV) are compositionally biased toward basic and acidic residues. Disordered regions lie at residues 1 to 54 (MADP…NEKK) and 118 to 165 (AAQQ…EDKD). Residues 20–34 (EDLDNSSDDESDIEA) are compositionally biased toward acidic residues. The region spanning 49-114 (SRNEKKARKA…AKIEDLNASA (66 aa)) is the NAC-A/B domain. Over residues 127-146 (AEHDHAGHTHEHEEAGKAKE) the composition is skewed to basic and acidic residues. The segment covering 147-160 (EEEEDEGEEVDAEG) has biased composition (acidic residues). The UBA domain maps to 161 to 200 (IEDKDIELVMTQANVSRKKAIKALKENDNDIVNSIMALSI).

This sequence belongs to the NAC-alpha family. As to quaternary structure, part of the nascent polypeptide-associated complex (NAC), consisting of npc-1/egd2 and npc-2/egd1. NAC associates with ribosomes via npc-2/egd1.

The protein localises to the cytoplasm. It is found in the nucleus. In terms of biological role, component of the nascent polypeptide-associated complex (NAC), a dynamic component of the ribosomal exit tunnel, protecting the emerging polypeptides from interaction with other cytoplasmic proteins to ensure appropriate nascent protein targeting. The NAC complex also promotes mitochondrial protein import by enhancing productive ribosome interactions with the outer mitochondrial membrane and blocks the inappropriate interaction of ribosomes translating non-secretory nascent polypeptides with translocation sites in the membrane of the endoplasmic reticulum. Npc-1/egd2 may also be involved in transcription regulation. The sequence is that of Nascent polypeptide-associated complex subunit alpha (npc-1) from Neurospora crassa (strain ATCC 24698 / 74-OR23-1A / CBS 708.71 / DSM 1257 / FGSC 987).